A 387-amino-acid polypeptide reads, in one-letter code: Zn(2)-C6 fungal-type trascription factor aoiH (387 aa).

The segment at residues 21-48 (CDFCALSKVKCDRGQPQCVRCIKSGIDC) is a DNA-binding region (zn(2)-C6 fungal-type). The span at 68 to 87 (VRSTSATTQGTRRKQQTIAQ) shows a compositional bias: polar residues. Positions 68 to 94 (VRSTSATTQGTRRKQQTIAQHSPRRRI) are disordered.

It is found in the nucleus. Transcription factor; part of the gene cluster that mediates the biosynthesis of a methylated derivative of known natural products orthosporin and diaporthin. Positively regultaes the expression of the non-reducing polyketide synthase aoiG and the O-methyltransferase aoiO. The chain is Zn(2)-C6 fungal-type trascription factor aoiH from Aspergillus oryzae (strain ATCC 42149 / RIB 40) (Yellow koji mold).